The primary structure comprises 511 residues: Maturase K (511 aa).

Belongs to the intron maturase 2 family. MatK subfamily.

The protein localises to the plastid. Its subcellular location is the chloroplast. Usually encoded in the trnK tRNA gene intron. Probably assists in splicing its own and other chloroplast group II introns. In Bromus inermis (Smooth brome grass), this protein is Maturase K.